A 212-amino-acid chain; its full sequence is TATA-box-binding protein 2 (212 aa).

2 repeat units span residues 30–114 (THPE…KKIG) and 120–201 (SNFN…YPIL).

It belongs to the TBP family. In terms of assembly, belongs to the TFIID complex together with the TBP-associated factors (TAFs). Binds DNA as monomer.

The protein localises to the nucleus. Its function is as follows. General transcription factor that functions at the core of the DNA-binding multiprotein factor TFIID. Binding of TFIID to the TATA box is the initial transcriptional step of the pre-initiation complex (PIC), playing a role in the activation of eukaryotic genes transcribed by RNA polymerase II. The chain is TATA-box-binding protein 2 from Entamoeba histolytica (strain ATCC 30459 / HM-1:IMSS / ABRM).